The chain runs to 976 residues: Vacuolar membrane protease (976 aa).

Residues 1 to 15 (MKLKSVFRSVLKYRK) are Cytoplasmic-facing. The chain crosses the membrane as a helical span at residues 16–36 (TNLSLLLLITYSIITLLYIFD). Over 37-359 (HERYKLNLPK…KFFVISAKTL (323 aa)) the chain is Vacuolar. Residues N96 and N121 are each glycosylated (N-linked (GlcNAc...) asparagine). Zn(2+) contacts are provided by H156 and D168. N-linked (GlcNAc...) asparagine glycosylation occurs at N189. E200 (proton acceptor) is an active-site residue. Position 201 (E201) interacts with Zn(2+). N-linked (GlcNAc...) asparagine glycans are attached at residues N212 and N217. Residues E226 and H300 each contribute to the Zn(2+) site. The helical transmembrane segment at 360–380 (FYWNCIFLLVSPVVAIGLYLI) threads the bilayer. Over 381–392 (SRDRMTWKSHSW) the chain is Cytoplasmic. The helical transmembrane segment at 393 to 412 (LSWTRFPLSLAAGIIVQKLF) threads the bilayer. Over 413–428 (SNDIIRSNPLTFSRNY) the chain is Vacuolar. The helical transmembrane segment at 429–449 (FWPISAFFTQVIFTSYVLINC) threads the bilayer. Residues 450 to 461 (SNFFFPCADMKS) lie on the Cytoplasmic side of the membrane. Residues 462-482 (LSIIELFIILWTILLFTSKLL) form a helical membrane-spanning segment. The Vacuolar segment spans residues 483 to 496 (YSSDYRYTGLYPLS). A helical membrane pass occupies residues 497-517 (IFFLLSTIAAILRLLALALGM). Over 518–627 (RTRKRLGREC…NSLKLEYTDY (110 aa)) the chain is Cytoplasmic. The disordered stretch occupies residues 528-610 (RDHHSNYSSH…PLLKGSNSME (83 aa)). Residues 549 to 558 (NLEQPQDQFT) show a composition bias toward polar residues. A compositionally biased stretch (low complexity) spans 559-570 (SSQDDQASIQDD). Positions 582-601 (NVDEDHGMDSSSQQHDERVP) are enriched in basic and acidic residues. Residues 628–648 (AWIIQFLLIVPIPSFILFNSV) traverse the membrane as a helical segment. The Vacuolar portion of the chain corresponds to 649–668 (DVIMDALNHTVQEGSKATFD). N656 is a glycosylation site (N-linked (GlcNAc...) asparagine). The helical transmembrane segment at 669–689 (VLRFGMVGSILMALPILPFFY) threads the bilayer. Topologically, residues 690–692 (KVN) are cytoplasmic. Residues 693–713 (YITISLTALLFLISASKTLLV) traverse the membrane as a helical segment. Over 714-976 (HPFTNSNPLK…LVIVKDAIIL (263 aa)) the chain is Vacuolar. 5 N-linked (GlcNAc...) asparagine glycosylation sites follow: N768, N796, N811, N866, and N937.

It belongs to the peptidase M28 family. It depends on Zn(2+) as a cofactor.

The protein localises to the vacuole membrane. May be involved in vacuolar sorting and osmoregulation. This chain is Vacuolar membrane protease, found in Saccharomyces cerevisiae (strain RM11-1a) (Baker's yeast).